The sequence spans 493 residues: Glutamate--tRNA ligase (493 aa).

The 'HIGH' region signature appears at 10–20 (PSPTGDPHVGT). The 'KMSKS' region signature appears at 251–255 (KLSKR). Lys254 provides a ligand contact to ATP.

The protein belongs to the class-I aminoacyl-tRNA synthetase family. Glutamate--tRNA ligase type 1 subfamily. Monomer.

Its subcellular location is the cytoplasm. The catalysed reaction is tRNA(Glu) + L-glutamate + ATP = L-glutamyl-tRNA(Glu) + AMP + diphosphate. In terms of biological role, catalyzes the attachment of glutamate to tRNA(Glu) in a two-step reaction: glutamate is first activated by ATP to form Glu-AMP and then transferred to the acceptor end of tRNA(Glu). This is Glutamate--tRNA ligase from Pseudomonas putida (strain ATCC 700007 / DSM 6899 / JCM 31910 / BCRC 17059 / LMG 24140 / F1).